The sequence spans 286 residues: Ribonuclease Z (286 aa).

Positions 61, 63, 65, 66, 153, 176, and 240 each coordinate Zn(2+). The active-site Proton acceptor is aspartate 65.

The protein belongs to the RNase Z family. As to quaternary structure, homodimer. Requires Zn(2+) as cofactor.

The catalysed reaction is Endonucleolytic cleavage of RNA, removing extra 3' nucleotides from tRNA precursor, generating 3' termini of tRNAs. A 3'-hydroxy group is left at the tRNA terminus and a 5'-phosphoryl group is left at the trailer molecule.. In terms of biological role, zinc phosphodiesterase, which displays some tRNA 3'-processing endonuclease activity. Probably involved in tRNA maturation, by removing a 3'-trailer from precursor tRNA. The protein is Ribonuclease Z of Mycolicibacterium gilvum (strain PYR-GCK) (Mycobacterium gilvum (strain PYR-GCK)).